Consider the following 169-residue polypeptide: Peptide deformylase 1 (169 aa).

Fe cation contacts are provided by cysteine 93 and histidine 135. Glutamate 136 is an active-site residue. Histidine 139 is a binding site for Fe cation.

Belongs to the polypeptide deformylase family. The cofactor is Fe(2+).

It catalyses the reaction N-terminal N-formyl-L-methionyl-[peptide] + H2O = N-terminal L-methionyl-[peptide] + formate. Functionally, removes the formyl group from the N-terminal Met of newly synthesized proteins. Requires at least a dipeptide for an efficient rate of reaction. N-terminal L-methionine is a prerequisite for activity but the enzyme has broad specificity at other positions. This chain is Peptide deformylase 1, found in Corynebacterium glutamicum (strain ATCC 13032 / DSM 20300 / JCM 1318 / BCRC 11384 / CCUG 27702 / LMG 3730 / NBRC 12168 / NCIMB 10025 / NRRL B-2784 / 534).